The sequence spans 321 residues: Lipoyl synthase (321 aa).

[4Fe-4S] cluster-binding residues include Cys68, Cys73, Cys79, Cys94, Cys98, Cys101, and Ser308. One can recognise a Radical SAM core domain in the interval 80–297 (FNHGTATFMI…KAEAMAMGFT (218 aa)).

Belongs to the radical SAM superfamily. Lipoyl synthase family. The cofactor is [4Fe-4S] cluster.

The protein localises to the cytoplasm. The catalysed reaction is [[Fe-S] cluster scaffold protein carrying a second [4Fe-4S](2+) cluster] + N(6)-octanoyl-L-lysyl-[protein] + 2 oxidized [2Fe-2S]-[ferredoxin] + 2 S-adenosyl-L-methionine + 4 H(+) = [[Fe-S] cluster scaffold protein] + N(6)-[(R)-dihydrolipoyl]-L-lysyl-[protein] + 4 Fe(3+) + 2 hydrogen sulfide + 2 5'-deoxyadenosine + 2 L-methionine + 2 reduced [2Fe-2S]-[ferredoxin]. It functions in the pathway protein modification; protein lipoylation via endogenous pathway; protein N(6)-(lipoyl)lysine from octanoyl-[acyl-carrier-protein]: step 2/2. In terms of biological role, catalyzes the radical-mediated insertion of two sulfur atoms into the C-6 and C-8 positions of the octanoyl moiety bound to the lipoyl domains of lipoate-dependent enzymes, thereby converting the octanoylated domains into lipoylated derivatives. The polypeptide is Lipoyl synthase (Yersinia enterocolitica serotype O:8 / biotype 1B (strain NCTC 13174 / 8081)).